The following is a 415-amino-acid chain: Tyrosine--tRNA ligase (415 aa).

The 'HIGH' region signature appears at 54–63 (PTGRDIHLGH). Positions 248–252 (KMSKS) match the 'KMSKS' region motif. K251 contacts ATP. One can recognise an S4 RNA-binding domain in the interval 351 to 415 (AKAFYLLSAI…GKKTFRRLTR (65 aa)).

The protein belongs to the class-I aminoacyl-tRNA synthetase family. TyrS type 2 subfamily. As to quaternary structure, homodimer.

The protein localises to the cytoplasm. The enzyme catalyses tRNA(Tyr) + L-tyrosine + ATP = L-tyrosyl-tRNA(Tyr) + AMP + diphosphate + H(+). Catalyzes the attachment of tyrosine to tRNA(Tyr) in a two-step reaction: tyrosine is first activated by ATP to form Tyr-AMP and then transferred to the acceptor end of tRNA(Tyr). This is Tyrosine--tRNA ligase from Prochlorococcus marinus (strain MIT 9313).